Reading from the N-terminus, the 1779-residue chain is 5-methyl-1-naphthoate synthase (1779 aa).

A Ketosynthase family 3 (KS3) domain is found at 10–433 (VEPLAVIGMS…GSIAHAVLQQ (424 aa)). Residues C181, H316, and H356 each act as for beta-ketoacyl synthase activity in the active site. The N-terminal hotdog fold stretch occupies residues 902-1027 (HTLIGARTTV…ATVVHEPEVG (126 aa)). Residues 902 to 1180 (HTLIGARTTV…YVKVQDIGSG (279 aa)) form the PKS/mFAS DH domain. Residues 1042-1180 (PVSWTWAKVD…YVKVQDIGSG (139 aa)) are C-terminal hotdog fold. Residues 1664–1742 (GELPELVLKV…ALAEFLAAEV (79 aa)) form the Carrier domain. An O-(pantetheine 4'-phosphoryl)serine modification is found at S1702. The disordered stretch occupies residues 1746–1771 (TADAEETDPVAGLPAPQQGSGTAEQL).

The catalysed reaction is 5 malonyl-CoA + acetyl-CoA + 3 NADPH + 7 H(+) = 5-methyl-1-naphthoate + 5 CO2 + 3 NADP(+) + 6 CoA + 4 H2O. It participates in antibiotic biosynthesis. In terms of biological role, polyketide synthase that catalyzes the biosynthesis of the bicyclic aromatic compound 5-methyl-1-naphthoate in the biosynthesis of the antitumor antibiotic azinomycin B. The chain is 5-methyl-1-naphthoate synthase from Streptomyces sahachiroi.